The chain runs to 86 residues: Putative sodium channel toxin Ts17 (86 aa).

An N-terminal signal peptide occupies residues 1 to 19 (MNYFIFLVVACLLTAGTEG). Residues 21–82 (KDGYPVEGDN…EPTKTSGRCK (62 aa)) form the LCN-type CS-alpha/beta domain. Intrachain disulfides connect C31–C81, C35–C57, C43–C64, and C47–C66. P83 bears the Proline amide mark.

This sequence belongs to the long (4 C-C) scorpion toxin superfamily. Sodium channel inhibitor family. Alpha subfamily. In terms of tissue distribution, expressed by the venom gland.

Its subcellular location is the secreted. In terms of biological role, alpha toxins bind voltage-independently at site-3 of sodium channels (Nav) and inhibit the inactivation of the activated channels, thereby blocking neuronal transmission. The polypeptide is Putative sodium channel toxin Ts17 (Tityus serrulatus (Brazilian scorpion)).